The primary structure comprises 331 residues: Ketol-acid reductoisomerase (NADP(+)) (331 aa).

The region spanning 1–181 (MKMYYDADAD…GGTRAGVIET (181 aa)) is the KARI N-terminal Rossmann domain. NADP(+) contacts are provided by residues 24–27 (YGSQ), arginine 47, serine 50, and 82–85 (DEKQ). Residue histidine 107 is part of the active site. Glycine 133 is an NADP(+) binding site. The region spanning 182 to 327 (TFREETETDL…KKLRAMMPWL (146 aa)) is the KARI C-terminal knotted domain. The Mg(2+) site is built by aspartate 190, glutamate 194, glutamate 226, and glutamate 230. Residue serine 251 participates in substrate binding.

The protein belongs to the ketol-acid reductoisomerase family. Mg(2+) is required as a cofactor.

The enzyme catalyses (2R)-2,3-dihydroxy-3-methylbutanoate + NADP(+) = (2S)-2-acetolactate + NADPH + H(+). It carries out the reaction (2R,3R)-2,3-dihydroxy-3-methylpentanoate + NADP(+) = (S)-2-ethyl-2-hydroxy-3-oxobutanoate + NADPH + H(+). Its pathway is amino-acid biosynthesis; L-isoleucine biosynthesis; L-isoleucine from 2-oxobutanoate: step 2/4. It functions in the pathway amino-acid biosynthesis; L-valine biosynthesis; L-valine from pyruvate: step 2/4. In terms of biological role, involved in the biosynthesis of branched-chain amino acids (BCAA). Catalyzes an alkyl-migration followed by a ketol-acid reduction of (S)-2-acetolactate (S2AL) to yield (R)-2,3-dihydroxy-isovalerate. In the isomerase reaction, S2AL is rearranged via a Mg-dependent methyl migration to produce 3-hydroxy-3-methyl-2-ketobutyrate (HMKB). In the reductase reaction, this 2-ketoacid undergoes a metal-dependent reduction by NADPH to yield (R)-2,3-dihydroxy-isovalerate. The polypeptide is Ketol-acid reductoisomerase (NADP(+)) (Heliobacterium modesticaldum (strain ATCC 51547 / Ice1)).